A 189-amino-acid chain; its full sequence is Resolvase (189 aa).

The Resolvase/invertase-type recombinase catalytic domain occupies 1–139 (MLVGYARVST…EGLKSAKARG (139 aa)). Ser9 serves as the catalytic O-(5'-phospho-DNA)-serine intermediate. A disordered region spans residues 130 to 151 (EGLKSAKARGRNGGRPSKRNDK). Positions 165–184 (IVDIVKQTGLSRATVYRVLN) form a DNA-binding region, H-T-H motif.

The protein belongs to the site-specific recombinase resolvase family.

In terms of biological role, a likely role for the res protein would be to stabilize pIP404 by reducing the number of plasmid multimers resulting from homologous recombination. The sequence is that of Resolvase (res) from Clostridium perfringens.